The primary structure comprises 723 residues: ADP-ribosylation factor-binding protein GGA3 (723 aa).

The binds to ARF1 (in long isoform) stretch occupies residues 1–313; that stretch reads MAEAEGESLE…GEVATLTLPD (313 aa). Positions 16–146 constitute a VHS domain; that stretch reads ATNPSNRQED…MLKRQGIVQS (131 aa). Residues serine 159 and serine 275 each carry the phosphoserine modification. The GAT domain occupies 171–298; that stretch reads DEEKSKLLAK…VINSYKTIIE (128 aa). The tract at residues 299-593 is unstructured hinge; the sequence is GQVINGEVAT…IHVPLESIKP (295 aa). The interval 339–384 is disordered; sequence SSVLAPAPTPPSSGIPILPPPPQASGPPRSRSSSQAEATLGPSSTS. Positions 345–363 are enriched in pro residues; it reads APTPPSSGIPILPPPPQAS. The span at 364–374 shows a compositional bias: low complexity; that stretch reads GPPRSRSSSQA. Residues 391-395 carry the DXXLL motif; the sequence is DEELL. Positions 428–464 are disordered; the sequence is DFFSPRPGTAACGASDAPLLQPSAPSSSSSQAPLPPP. Residues 441 to 459 are compositionally biased toward low complexity; sequence ASDAPLLQPSAPSSSSSQA. The GAE domain occupies 594–715; sequence SSALPVTAYD…TEVGEVDQFP (122 aa).

This sequence belongs to the GGA protein family. Monomer. Interacts with GGA1 and GGA2. Binds to clathrin and activated ARFs, such as ARF1, ARF5 and ARF6. Binds RABEP1 and RABGEF1. Interacts with the membrane proteins M6PR/CD-MPR and IGF2R/CI-MPR and the accessory proteins SYNRG, EPN4, NECAP1, NECAP2 and AFTPH/aftiphilin. Interacts with TSG101 and UBC. Interacts with ADRA2B. Interacts with NTRK1; the interaction is independent of NTRK1 activation and ubiquitination. Interacts (via VHS domain) with BACE1 (via DXXLL motif). Post-translationally, phosphorylated by CK2 and dephosphorylated by PP2A. Phosphorylation of GGA3 allows the internal DXXLL motif to bind the VHS domain and to inhibit the recognition of cargo signals. Ubiquitinated. In terms of processing, proteolytically cleaved during apoptosis by CASP3. As to expression, ubiquitously expressed.

Its subcellular location is the golgi apparatus. The protein localises to the trans-Golgi network membrane. It is found in the endosome membrane. It localises to the early endosome membrane. The protein resides in the recycling endosome membrane. Plays a role in protein sorting and trafficking between the trans-Golgi network (TGN) and endosomes. Mediates the ARF-dependent recruitment of clathrin to the TGN and binds ubiquitinated proteins and membrane cargo molecules with a cytosolic acidic cluster-dileucine (DXXLL) motif. Mediates export of the GPCR receptor ADRA2B to the cell surface. nvolved in BACE1 transport and sorting as well as regulation of BACE1 protein levels. Regulates retrograde transport of BACE1 from endosomes to the trans-Golgi network via interaction through the VHS motif and dependent of BACE1 phosphorylation. Modulates BACE1 protein levels independently of the interaction between VHS domain and DXXLL motif through recognition of ubiquitination. Key player in a novel DXXLL-mediated endosomal sorting machinery to the recycling pathway that targets NTRK1 to the plasma membrane. The chain is ADP-ribosylation factor-binding protein GGA3 from Homo sapiens (Human).